The following is a 584-amino-acid chain: Alpha-glucosidase MAL32 (584 aa).

The Nucleophile role is filled by Asp-214. Glu-276 serves as the catalytic Proton donor.

It belongs to the glycosyl hydrolase 13 family.

It catalyses the reaction Hydrolysis of terminal, non-reducing (1-&gt;4)-linked alpha-D-glucose residues with release of alpha-D-glucose.. This Saccharomyces cerevisiae (strain ATCC 204508 / S288c) (Baker's yeast) protein is Alpha-glucosidase MAL32 (MAL32).